The chain runs to 510 residues: Ribonuclease Y (510 aa).

A helical membrane pass occupies residues 2–22; it reads IYIIFSSIFAGFILGFLVRVF. Residues 198–258 enclose the KH domain; it reads TVASVELPND…IRKELAKRTL (61 aa). The HD domain occupies 324 to 419; the sequence is VLSHSKETAI…VQIADAISAS (96 aa).

Belongs to the RNase Y family.

The protein localises to the cell membrane. Endoribonuclease that initiates mRNA decay. The polypeptide is Ribonuclease Y (Borrelia garinii subsp. bavariensis (strain ATCC BAA-2496 / DSM 23469 / PBi) (Borreliella bavariensis)).